The chain runs to 113 residues: Holo-[acyl-carrier-protein] synthase (113 aa).

2 residues coordinate Mg(2+): aspartate 5 and glutamate 50.

This sequence belongs to the P-Pant transferase superfamily. AcpS family. Mg(2+) serves as cofactor.

It localises to the cytoplasm. It catalyses the reaction apo-[ACP] + CoA = holo-[ACP] + adenosine 3',5'-bisphosphate + H(+). Functionally, transfers the 4'-phosphopantetheine moiety from coenzyme A to a Ser of acyl-carrier-protein. This Nautilia profundicola (strain ATCC BAA-1463 / DSM 18972 / AmH) protein is Holo-[acyl-carrier-protein] synthase.